A 696-amino-acid polypeptide reads, in one-letter code: Glycine--tRNA ligase beta subunit (696 aa).

It belongs to the class-II aminoacyl-tRNA synthetase family. In terms of assembly, tetramer of two alpha and two beta subunits.

It localises to the cytoplasm. It catalyses the reaction tRNA(Gly) + glycine + ATP = glycyl-tRNA(Gly) + AMP + diphosphate. The protein is Glycine--tRNA ligase beta subunit of Methylorubrum extorquens (strain CM4 / NCIMB 13688) (Methylobacterium extorquens).